Here is a 166-residue protein sequence, read N- to C-terminus: Ribosome maturation factor RimM (166 aa).

A PRC barrel domain is found at 90-163 (EGEFLVSQII…TVTIELLEGL (74 aa)).

It belongs to the RimM family. Binds ribosomal protein uS19.

The protein resides in the cytoplasm. Its function is as follows. An accessory protein needed during the final step in the assembly of 30S ribosomal subunit, possibly for assembly of the head region. Essential for efficient processing of 16S rRNA. May be needed both before and after RbfA during the maturation of 16S rRNA. It has affinity for free ribosomal 30S subunits but not for 70S ribosomes. The polypeptide is Ribosome maturation factor RimM (Oenococcus oeni (strain ATCC BAA-331 / PSU-1)).